The following is an 862-amino-acid chain: Rho guanine nucleotide exchange factor 7 (862 aa).

In terms of domain architecture, Calponin-homology (CH) spans 1–112 (MNSAEQTVTW…SLVTLNKVTA (112 aa)). Phosphoserine occurs at positions 132, 155, 164, 228, and 236. The SH3 domain maps to 163 to 222 (NSQLVVRAKFNFQQTNEDELSFSKGDVIHVTRVEEGGWWEGTHNGRTGWFPSNYVREIKP). One can recognise a DH domain in the interval 250–430 (YYNVVLQNIL…KNLSAQCQEV (181 aa)). A PH domain is found at 452 to 557 (DIKTLGSVTY…WVEHLQKQTK (106 aa)). The residue at position 497 (Ser497) is a Phosphoserine. 3 disordered regions span residues 559–591 (TSVS…ADSK), 657–679 (KTMK…EFAV), and 728–748 (DQSS…EPSD). Positions 572–585 (PSHTLPSHPLTPSS) are enriched in polar residues. Residues 657-669 (KTMKKLLPKRKPE) are compositionally biased toward basic residues. A compositionally biased stretch (basic and acidic residues) spans 670 to 679 (RKPSDEEFAV). Ser673 is subject to Phosphoserine. The span at 731-744 (SLDSLGRRSSLSRL) shows a compositional bias: low complexity. Ser776 is subject to Phosphoserine. The stretch at 804–854 (KSLVDTVYALKDEVQELRQDNKKMKKSLEEEQRARKDLEKLVRKVLKNMND) forms a coiled coil.

Interacts with PAK kinases through the SH3 domain. Interacts with unphosphorylated PAK1. Interacts with ITCH. Interacts with SCRIB; interaction is direct and may play a role in regulation of apoptosis. Interacts with GIT1 and TGFB1I1. Interacts with FRMPD4 (via N-terminus). Interacts with CaMK1. Interacts with BIN2. Interacts with PTK2/FAK1 and RAC1. Interacts with PARVB. Interacts with YWHAZ. Interacts (via PH domain) with NOX1 (via FAD-binding FR-type domain). Post-translationally, phosphorylated on Ser-673 by CaMK1; enhancement of GEF activity and downstream activation of RAC1. Phosphorylated by PTK2/FAK1; this promotes interaction with RAC1. Seems to be expressed in the central nervous system. Isoform B, isoform C and isoform E are expressed with highest levels in brain and testis.

Its subcellular location is the cell junction. It localises to the focal adhesion. The protein localises to the cell projection. It is found in the ruffle. The protein resides in the cytoplasm. Its subcellular location is the cell cortex. It localises to the lamellipodium. In terms of biological role, acts as a RAC1 guanine nucleotide exchange factor (GEF) and can induce membrane ruffling. May function as a positive regulator of apoptosis. Functions in cell migration, attachment and cell spreading. Promotes targeting of RAC1 to focal adhesions. Downstream of NMDA receptors and CaMKK-CaMK1 signaling cascade, promotes the formation of spines and synapses in hippocampal neurons. This is Rho guanine nucleotide exchange factor 7 (Arhgef7) from Mus musculus (Mouse).